A 911-amino-acid chain; its full sequence is MAASVENRQYTHLEPGLSGVGRTFKPRPDSPVRGCNFPPSSNHELPFQKKQNPPIYLDYSSSEDEDDDDEKNEYVQMIKKGKTELEPSIHDTRDEGTADNWIERNFSLIRLTGKHPFNSEPPLSRLMHHGFITPVPLHYVRNHGPVPKASWSDWTVEVTGLVKRPMKFTMDQLVNEFPSREFPVTLVCAGNRRKEQNMVKQTIGFNWGAAAVSTTVWRGVPLRALLKRCGVQSKKKGALNVCFEGSDVLPGGGGSKYGTSIKKEFAMDPSRDIIVAYMQNGEMLSPDHGFPVRMIIPGFIGGRMVKWLKRIVVTTQESESYYHYKDNRVLPPHVDAELANAEAWWYKPEYIINELNINSVITTPCHEEILPINAWTTQRPYTLRGYAYSGGGKKVTRVEVTLDGGETWSVCTLDHPEKPTKYGKYWCWCFWSLEVEVLDLLSAKEIAVRATDETLNTQPEKLIWNVMGMMNNCWFRVKMNVCKPHKGEIGIVFEHPTQPGNQSGGWMAKERHLEISAVAPPTLKKSISTPFMNTASKMYSMSEVRKHNSSDSAWIIVHGHIYDASRFLKDHPGGVDSILINAGTDCTEEFDAIHSDKAKKLLEDFRIGELITTGYTSDSSPNSSVHGSSSISSFLAPIKELVQTPTRSVALIPREKIPCKLVDKQSISHDVRKFKFALPSEDQVLGLPVGKHIFLCATVDDKLCMRAYTPTSTVDEVGFFELVVKIYFKGVHPKFPNGGQMSQHLDSLPIGAFLDVKGPLGHIEYQGKGNFLVHGKQKFAKKLAMIAGGTGITPVYQVMQSILKDPEDDTEMYVVYANRTEDDILLKDELDAWAEQVPNRVKVWYVVQESITQGWKYSTGFVTESILREHIPEPSHTTLALACGPPPMIQFAINPNLEKMGYDIKEELLVF.

Over residues 1 to 10 (MAASVENRQY) the composition is skewed to polar residues. The disordered stretch occupies residues 1 to 71 (MAASVENRQY…SEDEDDDDEK (71 aa)). Over residues 61–71 (SSEDEDDDDEK) the composition is skewed to acidic residues. Position 188 (cysteine 188) interacts with Mo-molybdopterin. Positions 536–611 (SKMYSMSEVR…LEDFRIGELI (76 aa)) constitute a Cytochrome b5 heme-binding domain. 2 residues coordinate heme: histidine 571 and histidine 594. One can recognise an FAD-binding FR-type domain in the interval 654 to 766 (REKIPCKLVD…KGPLGHIEYQ (113 aa)). FAD is bound by residues 706–709 (RAYT), 723–727 (VVKIY), phenylalanine 728, phenylalanine 735, 740–742 (QMS), and threonine 793.

Belongs to the nitrate reductase family. In terms of assembly, homodimer. The cofactor is FAD. Heme serves as cofactor. Requires Mo-molybdopterin as cofactor.

It catalyses the reaction nitrite + NAD(+) + H2O = nitrate + NADH + H(+). In terms of biological role, nitrate reductase is a key enzyme involved in the first step of nitrate assimilation in plants, fungi and bacteria. This chain is Nitrate reductase [NADH] (NIA), found in Solanum lycopersicum (Tomato).